Consider the following 265-residue polypeptide: Probable cyclic nucleotide phosphodiesterase SynWH7803_1390 (265 aa).

Residues Asp9, His11, Asp49, Asn86, His157, His196, and His198 each contribute to the Fe cation site. AMP-binding positions include His11, Asp49, and Asn86 to His87. His198 serves as a coordination point for AMP.

This sequence belongs to the cyclic nucleotide phosphodiesterase class-III family. Requires Fe(2+) as cofactor.

The chain is Probable cyclic nucleotide phosphodiesterase SynWH7803_1390 from Synechococcus sp. (strain WH7803).